The sequence spans 493 residues: Glutamate--tRNA ligase (493 aa).

The 'HIGH' region signature appears at 10 to 20 (PSPTGDPHVGT). Residues Cys107, Cys109, Cys134, and His136 each coordinate Zn(2+). Residues 251 to 255 (KLSKR) carry the 'KMSKS' region motif. Lys254 lines the ATP pocket.

Belongs to the class-I aminoacyl-tRNA synthetase family. Glutamate--tRNA ligase type 1 subfamily. In terms of assembly, monomer. It depends on Zn(2+) as a cofactor.

It is found in the cytoplasm. The catalysed reaction is tRNA(Glu) + L-glutamate + ATP = L-glutamyl-tRNA(Glu) + AMP + diphosphate. Catalyzes the attachment of glutamate to tRNA(Glu) in a two-step reaction: glutamate is first activated by ATP to form Glu-AMP and then transferred to the acceptor end of tRNA(Glu). This is Glutamate--tRNA ligase from Stutzerimonas stutzeri (strain A1501) (Pseudomonas stutzeri).